The chain runs to 260 residues: MVKFYDKEFGSRLLIGSALYPSASIMQDSIRDSGAEIVTVSLRRETAGGKVGDVFWSLIQKLGVTVLPNTAGCRSVREAVTTAKMARELFATSWIKLEVIADNDTLQPDVVGLVEAATILIKDGFEVFPYCTEDLSVAQRLVDAGCQVIMPWAAPIGSARGIVNRDALKLLRDRLPDITLVVDAGLGAPSHAAEAMELGFDAVLLNTAIAKAEHPAVMAAAFKLAIEGGRLGYEAGLMGPRDFASPSTPVIGTPFWHAVS.

Lys96 (schiff-base intermediate with DXP) is an active-site residue. Residues Gly157, 184-185 (AG), and 206-207 (NT) each bind 1-deoxy-D-xylulose 5-phosphate.

This sequence belongs to the ThiG family. In terms of assembly, homotetramer. Forms heterodimers with either ThiH or ThiS.

It is found in the cytoplasm. The catalysed reaction is [ThiS sulfur-carrier protein]-C-terminal-Gly-aminoethanethioate + 2-iminoacetate + 1-deoxy-D-xylulose 5-phosphate = [ThiS sulfur-carrier protein]-C-terminal Gly-Gly + 2-[(2R,5Z)-2-carboxy-4-methylthiazol-5(2H)-ylidene]ethyl phosphate + 2 H2O + H(+). It participates in cofactor biosynthesis; thiamine diphosphate biosynthesis. Functionally, catalyzes the rearrangement of 1-deoxy-D-xylulose 5-phosphate (DXP) to produce the thiazole phosphate moiety of thiamine. Sulfur is provided by the thiocarboxylate moiety of the carrier protein ThiS. In vitro, sulfur can be provided by H(2)S. This chain is Thiazole synthase, found in Rhodopseudomonas palustris (strain BisA53).